A 337-amino-acid polypeptide reads, in one-letter code: tRNA dimethylallyltransferase (337 aa).

Residue 24-31 (GPTGAGKT) participates in ATP binding. Substrate is bound at residue 26–31 (TGAGKT). 2 interaction with substrate tRNA regions span residues 49-52 (DSRQ) and 188-192 (QRAVR).

The protein belongs to the IPP transferase family. In terms of assembly, monomer. Mg(2+) is required as a cofactor.

The enzyme catalyses adenosine(37) in tRNA + dimethylallyl diphosphate = N(6)-dimethylallyladenosine(37) in tRNA + diphosphate. In terms of biological role, catalyzes the transfer of a dimethylallyl group onto the adenine at position 37 in tRNAs that read codons beginning with uridine, leading to the formation of N6-(dimethylallyl)adenosine (i(6)A). This Nitratidesulfovibrio vulgaris (strain DSM 19637 / Miyazaki F) (Desulfovibrio vulgaris) protein is tRNA dimethylallyltransferase.